We begin with the raw amino-acid sequence, 476 residues long: Nyctalopin (476 aa).

Positions Met1–Ala18 are cleaved as a signal peptide. LRR repeat units lie at residues Val60–Arg84, Arg85–Ala108, Leu110–Arg133, Arg134–Arg157, Leu159–His181, Ala182–Arg204, Ser205–Glu228, His229–Arg252, Leu254–Glu276, Leu277–Leu300, and Leu302–Gly324. Asn92 carries N-linked (GlcNAc...) asparagine glycosylation. Asn178 carries N-linked (GlcNAc...) asparagine glycosylation. Asn295 carries N-linked (GlcNAc...) asparagine glycosylation. An LRRCT domain is found at Asp336–Leu387. N-linked (GlcNAc...) asparagine glycans are attached at residues Asn388, Asn427, and Asn434.

Belongs to the small leucine-rich proteoglycan (SLRP) family. SLRP class IV subfamily. As to expression, expressed in kidney and retina. Also at low levels in brain, testis and muscle. Within the retina, expressed in the inner segment of photoreceptors, outer and inner nuclear layers and the ganglion cell layer.

The protein resides in the secreted. It localises to the extracellular space. The protein localises to the extracellular matrix. This is Nyctalopin (NYX) from Homo sapiens (Human).